We begin with the raw amino-acid sequence, 702 residues long: MHWILALSLLLLLWLLVASPRLAWLKAGLLSLLLLLLSAWGLVDRLSGDGINAATLYHLRADMDGAGVSDFSGYIAVFIGMVLLSLSPLMLLRVRRFRRPRGGGAVFGAFVVMLLVSMAVSPVYRDGKRLYYQLRPVDYATVVPEYQVPQQPLQKRKNIVWIYGESLERTYFDEATFPGLMPNLRQLATEAVDVRNLTSTEGSGWTIAGMVASMCGVPLTTAPGDENSMGRMGLFLPEARCLGDYLKDQGYRNHYVGGADASFAGKGSFLASHGFDVVHDVNYFHDKGVAPKHFSAWGVHDDVLLDDAWESFQTLSRAGQPFMLTTLTMDTHHPAGHLPLACKNQRYESPLGDIGLLHAIKCSDRLIGELVTRIRNSRYGRNTIIVIASDHLAMPNDLSDVLAKQKRENLLLFLGKDIPPQQVVRRAGSTLDSGATLLQLLEPGMRTLGFGRSLLANDAPPSASVAASRDSGRDYPRYLAYARTLWTGRSTRMLRVNGNGDVVVGVQQVRPPVLLEYDDDTNLKTVYLENTSRQFDRTHSDGTLAYVDRCTAFEDGSADGDWCALVVDRNQHMKLYRDPDLTRGIAVDAPLDVTPQAPRPRVRQPIMLTQAARKTEAGRYMLELYAKRRPTRAFWVEAVSSERKVVLAQQWVVPDASGRIRMPVGLEHAVEDLGIRAWLDYTEEVSVDDLALVKDTAVADRS.

The next 3 helical transmembrane spans lie at 2–22 (HWILALSLLLLLWLLVASPRL), 71–91 (FSGYIAVFIGMVLLSLSPLML), and 103–123 (GGAVFGAFVVMLLVSMAVSPV).

The protein belongs to the OpgB family.

It is found in the cell inner membrane. It catalyses the reaction a phosphatidylglycerol + a membrane-derived-oligosaccharide D-glucose = a 1,2-diacyl-sn-glycerol + a membrane-derived-oligosaccharide 6-(glycerophospho)-D-glucose.. It functions in the pathway glycan metabolism; osmoregulated periplasmic glucan (OPG) biosynthesis. Transfers a phosphoglycerol residue from phosphatidylglycerol to the membrane-bound nascent glucan backbones. In Xanthomonas campestris pv. campestris (strain B100), this protein is Phosphoglycerol transferase I.